The chain runs to 316 residues: N-acetylmuramic acid 6-phosphate etherase (316 aa).

The tract at residues 1–23 (MAGFDPTLQPSDDRGHLLTEQSN) is disordered. The SIS domain maps to 66 to 229 (ISKRLSSGGR…STTVMVRLGK (164 aa)). E94 (proton donor) is an active-site residue. E125 is an active-site residue.

Belongs to the GCKR-like family. MurNAc-6-P etherase subfamily. In terms of assembly, homodimer.

It carries out the reaction N-acetyl-D-muramate 6-phosphate + H2O = N-acetyl-D-glucosamine 6-phosphate + (R)-lactate. The protein operates within amino-sugar metabolism; N-acetylmuramate degradation. Specifically catalyzes the cleavage of the D-lactyl ether substituent of MurNAc 6-phosphate, producing GlcNAc 6-phosphate and D-lactate. The polypeptide is N-acetylmuramic acid 6-phosphate etherase (Synechococcus sp. (strain CC9902)).